Consider the following 1057-residue polypeptide: uncharacterized protein (1057 aa).

This sequence belongs to the IIV-6 261R/396L/443R family.

This is an uncharacterized protein from Acheta domesticus (House cricket).